Here is a 491-residue protein sequence, read N- to C-terminus: Fatty acyl-CoA reductase 1 (491 aa).

It belongs to the fatty acyl-CoA reductase family. Expressed in the endodermal cell layer surrounding the central vasculature in roots. Expressed in the hilum region of seeds. Expressed in lateral root tips, cotyledons, the shoot apex, young leaves, petals, stamen filaments, and receptacle of siliques.

It carries out the reaction a long-chain fatty acyl-CoA + 2 NADPH + 2 H(+) = a long-chain primary fatty alcohol + 2 NADP(+) + CoA. Catalyzes the reduction of fatty acyl-CoA to fatty alcohols. Catalyzes specifically the formation of C18:0 and C22:0 fatty alcohols. Provides the fatty alcohols required for synthesis of suberin in roots, seed coat and wound-induced leaf tissue. Provides the fatty alcohols required for synthesis of alkyl hydroxycinnamates in root waxes. This Arabidopsis thaliana (Mouse-ear cress) protein is Fatty acyl-CoA reductase 1.